A 63-amino-acid polypeptide reads, in one-letter code: Large ribosomal subunit protein eL37 (63 aa).

Zn(2+) contacts are provided by C20, C23, C35, and C38. Residues 20–38 (CRRCGRRAFNVKKGYCAAC) form a C4-type zinc finger.

This sequence belongs to the eukaryotic ribosomal protein eL37 family. In terms of assembly, part of the 50S ribosomal subunit. Requires Zn(2+) as cofactor.

Functionally, binds to the 23S rRNA. The chain is Large ribosomal subunit protein eL37 from Thermococcus kodakarensis (strain ATCC BAA-918 / JCM 12380 / KOD1) (Pyrococcus kodakaraensis (strain KOD1)).